The primary structure comprises 550 residues: Methionine--tRNA ligase (550 aa).

The 'HIGH' region motif lies at proline 12–histidine 22. Residues cysteine 144, cysteine 147, cysteine 157, and cysteine 160 each contribute to the Zn(2+) site. A 'KMSKS' region motif is present at residues glutamine 330–serine 334. Lysine 333 serves as a coordination point for ATP.

Belongs to the class-I aminoacyl-tRNA synthetase family. MetG type 1 subfamily. Monomer. Zn(2+) is required as a cofactor.

The protein localises to the cytoplasm. The enzyme catalyses tRNA(Met) + L-methionine + ATP = L-methionyl-tRNA(Met) + AMP + diphosphate. Is required not only for elongation of protein synthesis but also for the initiation of all mRNA translation through initiator tRNA(fMet) aminoacylation. The protein is Methionine--tRNA ligase of Chlamydia caviae (strain ATCC VR-813 / DSM 19441 / 03DC25 / GPIC) (Chlamydophila caviae).